A 388-amino-acid chain; its full sequence is Chorismate synthase (388 aa).

R39 and R45 together coordinate NADP(+). Residues 130–132 (RSS), 251–252 (NA), G296, 311–315 (KPIPT), and R337 each bind FMN.

Belongs to the chorismate synthase family. As to quaternary structure, homotetramer. It depends on FMNH2 as a cofactor.

The catalysed reaction is 5-O-(1-carboxyvinyl)-3-phosphoshikimate = chorismate + phosphate. The protein operates within metabolic intermediate biosynthesis; chorismate biosynthesis; chorismate from D-erythrose 4-phosphate and phosphoenolpyruvate: step 7/7. In terms of biological role, catalyzes the anti-1,4-elimination of the C-3 phosphate and the C-6 proR hydrogen from 5-enolpyruvylshikimate-3-phosphate (EPSP) to yield chorismate, which is the branch point compound that serves as the starting substrate for the three terminal pathways of aromatic amino acid biosynthesis. This reaction introduces a second double bond into the aromatic ring system. This chain is Chorismate synthase, found in Streptococcus uberis (strain ATCC BAA-854 / 0140J).